The chain runs to 383 residues: 3-dehydroquinate synthase (383 aa).

NAD(+) contacts are provided by residues 81–86 (EGEVSK), 115–119 (GVVGD), 139–140 (TS), Lys-152, and Lys-161. Glu-194, His-256, and His-274 together coordinate Zn(2+).

The protein belongs to the sugar phosphate cyclases superfamily. Dehydroquinate synthase family. Co(2+) serves as cofactor. Zn(2+) is required as a cofactor. Requires NAD(+) as cofactor.

It is found in the cytoplasm. It carries out the reaction 7-phospho-2-dehydro-3-deoxy-D-arabino-heptonate = 3-dehydroquinate + phosphate. The protein operates within metabolic intermediate biosynthesis; chorismate biosynthesis; chorismate from D-erythrose 4-phosphate and phosphoenolpyruvate: step 2/7. Functionally, catalyzes the conversion of 3-deoxy-D-arabino-heptulosonate 7-phosphate (DAHP) to dehydroquinate (DHQ). The protein is 3-dehydroquinate synthase of Nitrobacter winogradskyi (strain ATCC 25391 / DSM 10237 / CIP 104748 / NCIMB 11846 / Nb-255).